The chain runs to 1441 residues: Probable ubiquitin-conjugating enzyme E2 R521 (1441 aa).

The chain crosses the membrane as a helical span at residues 20–40; it reads YIHHIIINYITNSILYFFLIM. Residues 63-89 are a coiled coil; it reads NQSKLVNTLDIIKDEINKWEEKNTDKD. Positions 180-199 are enriched in basic and acidic residues; that stretch reads VSKDKMKDKSESNSEHEQES. Disordered regions lie at residues 180 to 207 and 283 to 305; these read VSKD…SNEI and IFGK…MSKV. The segment covering 286–303 has biased composition (low complexity); the sequence is KSKNSGPSSSKTSISSMS. The stretch at 340 to 368 forms a coiled coil; sequence TTNEDNNDLDNLINEVERLVQETKDQETK. Residues 505–538 show a composition bias toward low complexity; the sequence is TVEPVQEVAEEPVQQEVAEEPVQQEVAEEPVQQE. 2 disordered regions span residues 505-554 and 577-605; these read TVEP…PVQK and NDFS…NNLG. Residues 539-549 are compositionally biased toward acidic residues; sequence VAEEPVQEVAE. The UBC core domain maps to 1217-1380; it reads AISRELLSHS…VRFNCMKWAM (164 aa). Cys1306 (glycyl thioester intermediate) is an active-site residue.

The protein belongs to the ubiquitin-conjugating enzyme family.

It localises to the membrane. The enzyme catalyses S-ubiquitinyl-[E1 ubiquitin-activating enzyme]-L-cysteine + [E2 ubiquitin-conjugating enzyme]-L-cysteine = [E1 ubiquitin-activating enzyme]-L-cysteine + S-ubiquitinyl-[E2 ubiquitin-conjugating enzyme]-L-cysteine.. It participates in protein modification; protein ubiquitination. Its function is as follows. Catalyzes the covalent attachment of ubiquitin to other proteins. The polypeptide is Probable ubiquitin-conjugating enzyme E2 R521 (Acanthamoeba polyphaga (Amoeba)).